Here is a 219-residue protein sequence, read N- to C-terminus: MPLTDTPPSVPQKPRRGRPRGAPDASLAHQSLIRAGLEHLTEKGYSSVGVDEILKAARVPKGSFYHYFRNKADFGLALIEAYDTYFARLLDQAFLDGSLAPLARLRLFTRMAEEGMARHGFRRGCLVGNLGQEMGALPDDFRAALIGVLETWQRRTAQLFREAQACGELSADHDPDALAEAFWIGWEGAILRAKLELRPDPLHSFTRTFGRHFVTRTQE.

A disordered region spans residues 1-25 (MPLTDTPPSVPQKPRRGRPRGAPDA). Residues 26–86 (SLAHQSLIRA…ALIEAYDTYF (61 aa)) form the HTH tetR-type domain. A DNA-binding region (H-T-H motif) is located at residues 49 to 68 (GVDEILKAARVPKGSFYHYF).

In terms of biological role, a transcriptional repressor for its operon. Probably binds to 2 operator sequences in the promoter. This is Transcriptional regulator AcuR (acuR) from Cereibacter sphaeroides (strain ATCC 17023 / DSM 158 / JCM 6121 / CCUG 31486 / LMG 2827 / NBRC 12203 / NCIMB 8253 / ATH 2.4.1.) (Rhodobacter sphaeroides).